Reading from the N-terminus, the 81-residue chain is MAPRPQKKLFTRKKVCRFCADKELVIDYKDVKVLRNFVSERGKIIPRRIVGTCASHQRQLCEAVKRARQIALLPYSGSAQN.

It belongs to the bacterial ribosomal protein bS18 family. As to quaternary structure, part of the 30S ribosomal subunit. Forms a tight heterodimer with protein bS6.

Its function is as follows. Binds as a heterodimer with protein bS6 to the central domain of the 16S rRNA, where it helps stabilize the platform of the 30S subunit. This is Small ribosomal subunit protein bS18 from Desulfotalea psychrophila (strain LSv54 / DSM 12343).